A 111-amino-acid chain; its full sequence is Dynein light chain Tctex-type (111 aa).

This sequence belongs to the dynein light chain Tctex-type family. In terms of assembly, the cytoplasmic dynein complex consists of two catalytic heavy chains (HCs) and a number of non-catalytic subunits presented by intermediate chains (ICs), light intermediate chains (LICs) and light chains (LCs).

It localises to the cytoplasm. The protein localises to the cytoskeleton. Its function is as follows. Acts as one of several non-catalytic accessory components of the cytoplasmic dynein complex that are thought to be involved in linking dynein to cargos and to adapter proteins that regulate dynein function. Cytoplasmic dynein acts as a motor for the intracellular retrograde motility of vesicles and organelles along microtubules. Required for spermatid differentiation. Is not required for polarized transport in rhabdomere development and appears to be a non-essential component of the cytoplasmic dynein complex. The protein is Dynein light chain Tctex-type (Dlc90F) of Drosophila melanogaster (Fruit fly).